A 315-amino-acid chain; its full sequence is Tubulin beta-1 chain (315 aa).

The GTP site is built by serine 6, glycine 10, threonine 11, glycine 12, asparagine 72, and asparagine 94. The segment at 295–315 is disordered; that stretch reads DATADEEEYYEDEEEEEAQGM. Positions 297–315 are enriched in acidic residues; that stretch reads TADEEEYYEDEEEEEAQGM.

The protein belongs to the tubulin family. Dimer of alpha and beta chains. A typical microtubule is a hollow water-filled tube with an outer diameter of 25 nm and an inner diameter of 15 nM. Alpha-beta heterodimers associate head-to-tail to form protofilaments running lengthwise along the microtubule wall with the beta-tubulin subunit facing the microtubule plus end conferring a structural polarity. Microtubules usually have 13 protofilaments but different protofilament numbers can be found in some organisms and specialized cells. The cofactor is Mg(2+).

Its subcellular location is the cytoplasm. The protein localises to the cytoskeleton. Its function is as follows. Tubulin is the major constituent of microtubules, a cylinder consisting of laterally associated linear protofilaments composed of alpha- and beta-tubulin heterodimers. Microtubules grow by the addition of GTP-tubulin dimers to the microtubule end, where a stabilizing cap forms. Below the cap, tubulin dimers are in GDP-bound state, owing to GTPase activity of alpha-tubulin. This chain is Tubulin beta-1 chain (TUBB1), found in Daucus carota (Wild carrot).